The chain runs to 733 residues: Polyribonucleotide nucleotidyltransferase (733 aa).

Mg(2+) contacts are provided by Asp-489 and Asp-495. Residues 556-615 (PKIDTIKIDVDKIKIVIGKGGETIDKIIAETGVKIDIDEEGNVSIYSSDQDAINRAKEII) enclose the KH domain. Positions 625–693 (DEVYHAKVVR…AKGRVDASMK (69 aa)) constitute an S1 motif domain. Residues 691–733 (SMKVLLPRPPKSDKPKHHHDKGHHPHKEYKGHKDHQESPKTEE) are disordered. The span at 704–723 (KPKHHHDKGHHPHKEYKGHK) shows a compositional bias: basic residues. Positions 724-733 (DHQESPKTEE) are enriched in basic and acidic residues.

This sequence belongs to the polyribonucleotide nucleotidyltransferase family. It depends on Mg(2+) as a cofactor.

It is found in the cytoplasm. It catalyses the reaction RNA(n+1) + phosphate = RNA(n) + a ribonucleoside 5'-diphosphate. In terms of biological role, involved in mRNA degradation. Catalyzes the phosphorolysis of single-stranded polyribonucleotides processively in the 3'- to 5'-direction. The sequence is that of Polyribonucleotide nucleotidyltransferase from Streptococcus sanguinis (strain SK36).